A 210-amino-acid polypeptide reads, in one-letter code: Large ribosomal subunit protein bL25 (210 aa).

The tract at residues 190 to 210 (LKSEGAEGGEAEAGQAEEGEE) is disordered. Residues 196-210 (EGGEAEAGQAEEGEE) are compositionally biased toward acidic residues.

Belongs to the bacterial ribosomal protein bL25 family. CTC subfamily. In terms of assembly, part of the 50S ribosomal subunit; part of the 5S rRNA/L5/L18/L25 subcomplex. Contacts the 5S rRNA. Binds to the 5S rRNA independently of L5 and L18.

This is one of the proteins that binds to the 5S RNA in the ribosome where it forms part of the central protuberance. This is Large ribosomal subunit protein bL25 from Chelativorans sp. (strain BNC1).